We begin with the raw amino-acid sequence, 125 residues long: MNEKWIVERVEREGGRLWLYVNDAPVPLARVTPKRHMLVDSDALAFAYILETDDRFLYVMIPKPWWPELKAALDAKEPVWLRCGERTLELEQFHDELSYLLENIRGNANYGEALEQAVQDVFFEQ.

It belongs to the UPF0738 family.

This Geobacillus kaustophilus (strain HTA426) protein is UPF0738 protein GK0828.